The sequence spans 296 residues: Thymidylate synthase (296 aa).

DUMP is bound by residues Arg24 and 151 to 152; that span reads RR. The Nucleophile role is filled by Cys171. Residues 197-200, Asn208, and 238-240 each bind dUMP; these read RSAD and HVY. A (6R)-5,10-methylene-5,6,7,8-tetrahydrofolate-binding site is contributed by Asp200.

It belongs to the thymidylate synthase family. Homodimer.

The catalysed reaction is dUMP + (6R)-5,10-methylene-5,6,7,8-tetrahydrofolate = 7,8-dihydrofolate + dTMP. Its pathway is pyrimidine metabolism; dTTP biosynthesis. The chain is Thymidylate synthase (tms1) from Agaricus bisporus (White button mushroom).